A 479-amino-acid chain; its full sequence is D-hydantoinase/dihydropyrimidinase (479 aa).

Zn(2+)-binding residues include histidine 59, histidine 61, and lysine 150. Lysine 150 carries the post-translational modification N6-carboxylysine. Tyrosine 155 serves as a coordination point for substrate. Residues histidine 183 and histidine 239 each coordinate Zn(2+). Serine 289 provides a ligand contact to substrate. A Zn(2+)-binding site is contributed by aspartate 316. Residue asparagine 337 participates in substrate binding.

It belongs to the metallo-dependent hydrolases superfamily. Hydantoinase/dihydropyrimidinase family. In terms of assembly, homotetramer. Zn(2+) is required as a cofactor. Post-translationally, carboxylation allows a single lysine to coordinate two zinc ions.

The enzyme catalyses 5,6-dihydrouracil + H2O = 3-(carbamoylamino)propanoate + H(+). Functionally, catalyzes the hydrolysis of dihydropyrimidines and of the structurally related DL-5-mono-substituted hydantoins, to produce N-carbamoyl-D-amino acids. This chain is D-hydantoinase/dihydropyrimidinase (dht), found in Pseudomonas aeruginosa (strain ATCC 15692 / DSM 22644 / CIP 104116 / JCM 14847 / LMG 12228 / 1C / PRS 101 / PAO1).